We begin with the raw amino-acid sequence, 144 residues long: D-aminoacyl-tRNA deacylase (144 aa).

Positions 136–137 match the Gly-cisPro motif, important for rejection of L-amino acids motif; that stretch reads GP.

Belongs to the DTD family. In terms of assembly, homodimer.

Its subcellular location is the cytoplasm. It carries out the reaction glycyl-tRNA(Ala) + H2O = tRNA(Ala) + glycine + H(+). The enzyme catalyses a D-aminoacyl-tRNA + H2O = a tRNA + a D-alpha-amino acid + H(+). In terms of biological role, an aminoacyl-tRNA editing enzyme that deacylates mischarged D-aminoacyl-tRNAs. Also deacylates mischarged glycyl-tRNA(Ala), protecting cells against glycine mischarging by AlaRS. Acts via tRNA-based rather than protein-based catalysis; rejects L-amino acids rather than detecting D-amino acids in the active site. By recycling D-aminoacyl-tRNA to D-amino acids and free tRNA molecules, this enzyme counteracts the toxicity associated with the formation of D-aminoacyl-tRNA entities in vivo and helps enforce protein L-homochirality. The chain is D-aminoacyl-tRNA deacylase from Actinobacillus succinogenes (strain ATCC 55618 / DSM 22257 / CCUG 43843 / 130Z).